Here is a 291-residue protein sequence, read N- to C-terminus: Nucleotide-binding protein lmo2474 (291 aa).

Position 13 to 20 (13 to 20 (GMSGAGKT)) interacts with ATP. GTP is bound at residue 63-66 (DLRG).

It belongs to the RapZ-like family.

Its function is as follows. Displays ATPase and GTPase activities. The protein is Nucleotide-binding protein lmo2474 of Listeria monocytogenes serovar 1/2a (strain ATCC BAA-679 / EGD-e).